Consider the following 301-residue polypeptide: Protoheme IX farnesyltransferase (301 aa).

The next 9 helical transmembrane spans lie at 16–36, 41–61, 93–113, 114–134, 141–161, 172–192, 217–237, 238–258, and 273–293; these read VVAL…PGIP, IQSG…AAAI, VFAG…VNLI, TAVL…VYLK, IVIG…AVTG, SLLV…LAIF, QILL…ATGM, SGVF…WYAW, and FGYS…DHWL.

It belongs to the UbiA prenyltransferase family. Protoheme IX farnesyltransferase subfamily.

It localises to the cell inner membrane. It catalyses the reaction heme b + (2E,6E)-farnesyl diphosphate + H2O = Fe(II)-heme o + diphosphate. The protein operates within porphyrin-containing compound metabolism; heme O biosynthesis; heme O from protoheme: step 1/1. Functionally, converts heme B (protoheme IX) to heme O by substitution of the vinyl group on carbon 2 of heme B porphyrin ring with a hydroxyethyl farnesyl side group. The protein is Protoheme IX farnesyltransferase of Xylella fastidiosa (strain 9a5c).